Reading from the N-terminus, the 64-residue chain is Large ribosomal subunit protein bL35c (64 aa).

It belongs to the bacterial ribosomal protein bL35 family.

The protein localises to the plastid. Its subcellular location is the chloroplast. The sequence is that of Large ribosomal subunit protein bL35c from Thalassiosira pseudonana (Marine diatom).